The primary structure comprises 238 residues: Probable septum site-determining protein MinC (238 aa).

This sequence belongs to the MinC family. Interacts with MinD and FtsZ.

In terms of biological role, cell division inhibitor that blocks the formation of polar Z ring septums. Rapidly oscillates between the poles of the cell to destabilize FtsZ filaments that have formed before they mature into polar Z rings. Prevents FtsZ polymerization. The chain is Probable septum site-determining protein MinC from Blochmanniella floridana.